Here is a 360-residue protein sequence, read N- to C-terminus: Dual-specificity RNA methyltransferase RlmN (360 aa).

E93 (proton acceptor) is an active-site residue. Residues 99-326 form the Radical SAM core domain; sequence EEDRNTLCIS…VITRSSRGAD (228 aa). C106 and C331 are joined by a disulfide. 3 residues coordinate [4Fe-4S] cluster: C113, C117, and C120. Residues 158-159, S190, 212-214, and N288 contribute to the S-adenosyl-L-methionine site; these read GE and SLN. The active-site S-methylcysteine intermediate is C331.

Belongs to the radical SAM superfamily. RlmN family. The cofactor is [4Fe-4S] cluster.

The protein resides in the cytoplasm. It carries out the reaction adenosine(2503) in 23S rRNA + 2 reduced [2Fe-2S]-[ferredoxin] + 2 S-adenosyl-L-methionine = 2-methyladenosine(2503) in 23S rRNA + 5'-deoxyadenosine + L-methionine + 2 oxidized [2Fe-2S]-[ferredoxin] + S-adenosyl-L-homocysteine. It catalyses the reaction adenosine(37) in tRNA + 2 reduced [2Fe-2S]-[ferredoxin] + 2 S-adenosyl-L-methionine = 2-methyladenosine(37) in tRNA + 5'-deoxyadenosine + L-methionine + 2 oxidized [2Fe-2S]-[ferredoxin] + S-adenosyl-L-homocysteine. Its function is as follows. Specifically methylates position 2 of adenine 2503 in 23S rRNA and position 2 of adenine 37 in tRNAs. m2A2503 modification seems to play a crucial role in the proofreading step occurring at the peptidyl transferase center and thus would serve to optimize ribosomal fidelity. The protein is Dual-specificity RNA methyltransferase RlmN of Geobacter sulfurreducens (strain ATCC 51573 / DSM 12127 / PCA).